The chain runs to 199 residues: Superoxide dismutase [Mn] (199 aa).

Mn(2+)-binding residues include histidine 27, histidine 76, aspartate 160, and histidine 164.

Belongs to the iron/manganese superoxide dismutase family. Requires Mn(2+) as cofactor.

It catalyses the reaction 2 superoxide + 2 H(+) = H2O2 + O2. Its function is as follows. Destroys superoxide anion radicals which are normally produced within the cells and which are toxic to biological systems. This chain is Superoxide dismutase [Mn] (sodA), found in Corynebacterium diphtheriae (strain ATCC 700971 / NCTC 13129 / Biotype gravis).